The following is a 246-amino-acid chain: Virulence plasmid protein pGP6-D (246 aa).

It belongs to the UPF0137 (pGP6-D) family.

In Chlamydia muridarum (strain MoPn / Nigg), this protein is Virulence plasmid protein pGP6-D.